Consider the following 392-residue polypeptide: Chaperone protein DnaJ (392 aa).

A J domain is found at 2 to 67 (DYYSILGISK…QKRDSYDRFG (66 aa)). The CR-type zinc-finger motif lies at 148–226 (GVEKELVVSG…CRGQGRVKDK (79 aa)). Positions 161, 164, 178, 181, 200, 203, 214, and 217 each coordinate Zn(2+). 4 CXXCXGXG motif repeats span residues 161-168 (CETCSGQG), 178-185 (CERCKGSG), 200-207 (CPECGGEG), and 214-221 (CSSCRGQG).

Belongs to the DnaJ family. In terms of assembly, homodimer. Requires Zn(2+) as cofactor.

The protein resides in the cytoplasm. Functionally, participates actively in the response to hyperosmotic and heat shock by preventing the aggregation of stress-denatured proteins and by disaggregating proteins, also in an autonomous, DnaK-independent fashion. Unfolded proteins bind initially to DnaJ; upon interaction with the DnaJ-bound protein, DnaK hydrolyzes its bound ATP, resulting in the formation of a stable complex. GrpE releases ADP from DnaK; ATP binding to DnaK triggers the release of the substrate protein, thus completing the reaction cycle. Several rounds of ATP-dependent interactions between DnaJ, DnaK and GrpE are required for fully efficient folding. Also involved, together with DnaK and GrpE, in the DNA replication of plasmids through activation of initiation proteins. The polypeptide is Chaperone protein DnaJ (Chlamydia pneumoniae (Chlamydophila pneumoniae)).